Reading from the N-terminus, the 203-residue chain is B-cell CLL/lymphoma 7 protein family member B-A (203 aa).

Disordered regions lie at residues 55-80 (KEKE…ESSD) and 94-148 (SNQS…EIME). Over residues 109 to 129 (ADSSNNSSPPASEPVSPAPQS) the composition is skewed to low complexity.

It belongs to the BCL7 family.

This chain is B-cell CLL/lymphoma 7 protein family member B-A (bcl7ba), found in Danio rerio (Zebrafish).